The chain runs to 84 residues: MATKKAGGSSRNGRDSAGRRLGVKKYGGEVVIPGNIIVRQRGTKIFPGENVGMGKDHSIFSVVEGKVVFKKGKSDRTFVSVKPN.

The segment at 1–21 is disordered; the sequence is MATKKAGGSSRNGRDSAGRRL.

It belongs to the bacterial ribosomal protein bL27 family.

The chain is Large ribosomal subunit protein bL27 from Pelagibacter ubique (strain HTCC1062).